The sequence spans 484 residues: Malonate-semialdehyde dehydrogenase 1 (484 aa).

NAD(+) contacts are provided by phenylalanine 154, lysine 178, glutamate 181, arginine 182, and serine 231. Cysteine 286 (nucleophile) is an active-site residue. An NAD(+)-binding site is contributed by glutamate 384.

Belongs to the aldehyde dehydrogenase family. IolA subfamily. In terms of assembly, homotetramer.

The enzyme catalyses 3-oxopropanoate + NAD(+) + CoA + H2O = hydrogencarbonate + acetyl-CoA + NADH + H(+). The catalysed reaction is 2-methyl-3-oxopropanoate + NAD(+) + CoA + H2O = propanoyl-CoA + hydrogencarbonate + NADH + H(+). It participates in polyol metabolism; myo-inositol degradation into acetyl-CoA; acetyl-CoA from myo-inositol: step 7/7. In terms of biological role, catalyzes the oxidation of malonate semialdehyde (MSA) and methylmalonate semialdehyde (MMSA) into acetyl-CoA and propanoyl-CoA, respectively. Is involved in a myo-inositol catabolic pathway. Bicarbonate, and not CO2, is the end-product of the enzymatic reaction. In Bacillus licheniformis (strain ATCC 14580 / DSM 13 / JCM 2505 / CCUG 7422 / NBRC 12200 / NCIMB 9375 / NCTC 10341 / NRRL NRS-1264 / Gibson 46), this protein is Malonate-semialdehyde dehydrogenase 1.